A 404-amino-acid polypeptide reads, in one-letter code: Cysteine desulfurase IscS (404 aa).

Pyridoxal 5'-phosphate contacts are provided by residues 75–76 (AT), N155, Q183, and 203–205 (SAH). An N6-(pyridoxal phosphate)lysine modification is found at K206. T243 serves as a coordination point for pyridoxal 5'-phosphate. C328 functions as the Cysteine persulfide intermediate in the catalytic mechanism. C328 provides a ligand contact to [2Fe-2S] cluster.

This sequence belongs to the class-V pyridoxal-phosphate-dependent aminotransferase family. NifS/IscS subfamily. In terms of assembly, homodimer. Forms a heterotetramer with IscU, interacts with other sulfur acceptors. Pyridoxal 5'-phosphate serves as cofactor.

Its subcellular location is the cytoplasm. It carries out the reaction (sulfur carrier)-H + L-cysteine = (sulfur carrier)-SH + L-alanine. It participates in cofactor biosynthesis; iron-sulfur cluster biosynthesis. Master enzyme that delivers sulfur to a number of partners involved in Fe-S cluster assembly, tRNA modification or cofactor biosynthesis. Catalyzes the removal of elemental sulfur atoms from cysteine to produce alanine. Functions as a sulfur delivery protein for Fe-S cluster synthesis onto IscU, an Fe-S scaffold assembly protein, as well as other S acceptor proteins. The chain is Cysteine desulfurase IscS from Buchnera aphidicola subsp. Acyrthosiphon pisum (strain 5A).